A 548-amino-acid chain; its full sequence is ATP synthase subunit alpha (548 aa).

ATP is bound at residue 172–179; the sequence is GDRKTGKT. The disordered stretch occupies residues 526 to 548; that stretch reads AEAMDEADVEKESVKVRKPAPKK.

This sequence belongs to the ATPase alpha/beta chains family. F-type ATPases have 2 components, CF(1) - the catalytic core - and CF(0) - the membrane proton channel. CF(1) has five subunits: alpha(3), beta(3), gamma(1), delta(1), epsilon(1). CF(0) has three main subunits: a(1), b(2) and c(9-12). The alpha and beta chains form an alternating ring which encloses part of the gamma chain. CF(1) is attached to CF(0) by a central stalk formed by the gamma and epsilon chains, while a peripheral stalk is formed by the delta and b chains.

The protein resides in the cell membrane. The catalysed reaction is ATP + H2O + 4 H(+)(in) = ADP + phosphate + 5 H(+)(out). Functionally, produces ATP from ADP in the presence of a proton gradient across the membrane. The alpha chain is a regulatory subunit. The sequence is that of ATP synthase subunit alpha from Mycolicibacterium gilvum (strain PYR-GCK) (Mycobacterium gilvum (strain PYR-GCK)).